A 427-amino-acid chain; its full sequence is Inward rectifier potassium channel 2 (427 aa).

Residues 1-81 (MGSVRTNRYS…IFTTCVDIRW (81 aa)) lie on the Cytoplasmic side of the membrane. Cys76 bears the S-nitrosocysteine mark. A helical membrane pass occupies residues 82-106 (RWMLVIFCLAFVLSWLFFGCVFWLI). The Extracellular segment spans residues 107 to 128 (ALLHGDLDASRESKACVSEVNS). The helical; Pore-forming intramembrane region spans 129–140 (FTAAFLFSIETQ). The segment at residues 141–147 (TTIGYGF) is an intramembrane region (pore-forming). The Selectivity filter motif lies at 142-147 (TIGYGF). Residues 148–156 (RCVTDECPV) are Extracellular-facing. A helical membrane pass occupies residues 157-178 (AVFMVVFQSIVGCIIDAFIIGA). Topologically, residues 179–427 (VMAKMAKPKK…PRPLRRESEI (249 aa)) are cytoplasmic. The tract at residues 181-208 (AKMAKPKKRNETLVFSHNAVIAMRDGKL) is polyphosphoinositide (PIP2)-binding. The segment at 384-427 (SKEEDDSENGVPESTSTDTPPDIDLHNQASVPLEPRPLRRESEI) is disordered. A PDZ-binding motif is present at residues 425 to 427 (SEI).

This sequence belongs to the inward rectifier-type potassium channel (TC 1.A.2.1) family. KCNJ2 subfamily. In terms of assembly, homotetramer. Homomultimeric and heteromultimeric association with KCNJ4/Kir2.3. Can form heteromeric channels with Kir2.6/KCNJ18. Associates, via its PDZ-recognition domain, with a complex containing LIN7A, LIN7B, LIN7C, DLG1, CASK and APBA1. In terms of processing, S-nitrosylation increases the open probability and inward rectifying currents. As to expression, highly expressed in the ventricle and skeletal muscle, moderately in cerebrum and cerebellum. Only low levels are detected in kidney or lung.

It is found in the cell membrane. It localises to the sarcolemma. The protein resides in the T-tubule. It carries out the reaction K(+)(in) = K(+)(out). Its activity is regulated as follows. Activated by phosphatidylinositol 4,5 biphosphate (PtdIns(4,5)P2). Inward rectifier potassium channels are characterized by a greater tendency to allow potassium to flow into the cell rather than out of it. Their voltage dependence is regulated by the concentration of extracellular potassium; as external potassium is raised, the voltage range of the channel opening shifts to more positive voltages. The inward rectification is mainly due to the blockage of outward current by internal magnesium. Can be blocked by extracellular barium and cesium. Probably participates in establishing action potential waveform and excitability of neuronal and muscle tissues. The chain is Inward rectifier potassium channel 2 (KCNJ2) from Oryctolagus cuniculus (Rabbit).